The sequence spans 304 residues: Protein transport protein sec13 (304 aa).

6 WD repeats span residues 12-51 (GHDD…QRLV), 56-97 (GHDG…WQRI), 102-143 (LHKA…WEHN), 147-203 (AHGL…NGYK), 211-253 (GHTD…PGEW), and 259-298 (NFDA…EWEN).

Belongs to the WD repeat SEC13 family. In terms of assembly, the COPII coat is composed of at least 5 proteins: the sec23/24 complex, the sec13/31 complex, and the protein vtr-7/sar1. Component of the nuclear pore complex (NPC). NPC constitutes the exclusive means of nucleocytoplasmic transport. NPCs allow the passive diffusion of ions and small molecules and the active, nuclear transport receptor-mediated bidirectional transport of macromolecules such as proteins, RNAs, ribonucleoparticles (RNPs), and ribosomal subunits across the nuclear envelope. Due to its 8-fold rotational symmetry, all subunits are present with 8 copies or multiples thereof.

The protein localises to the cytoplasmic vesicle. The protein resides in the COPII-coated vesicle membrane. Its subcellular location is the endoplasmic reticulum membrane. It is found in the nucleus. It localises to the nuclear pore complex. In terms of biological role, component of the coat protein complex II (COPII) which promotes the formation of transport vesicles from the endoplasmic reticulum (ER). The coat has two main functions, the physical deformation of the endoplasmic reticulum membrane into vesicles and the selection of cargo molecules. It also functions as a component of the nuclear pore complex (NPC). NPC components, collectively referred to as nucleoporins (NUPs), can play the role of both NPC structural components and of docking or interaction partners for transiently associated nuclear transport factors. Nup-20/sec13 is required for efficient mRNA export from the nucleus to the cytoplasm and for correct nuclear pore biogenesis and distribution. The protein is Protein transport protein sec13 (nup-20) of Neurospora crassa (strain ATCC 24698 / 74-OR23-1A / CBS 708.71 / DSM 1257 / FGSC 987).